The primary structure comprises 5251 residues: Dynein heavy chain-like protein 2 (5251 aa).

5 Kelch repeats span residues 37–87, 95–143, 266–317, 318–367, and 372–421; these read GLFL…CYHN, YVII…LQNG, SLIL…IHGN, NLFI…LVES, and IIFI…QNNE. Residues 140–188 are disordered; the sequence is LQNGINGTNEKGYISQTDDENCSDNKYGENQDYGSNDSDSKDGEDIDKD. Residues 686–732 form a disordered region; sequence NNIEQRNNNNDNNDNNNNDNNNNNNNDNNNNNNNNNNNNNNNNDNLN. Residues 692-730 are compositionally biased toward low complexity; sequence NNNNDNNDNNNNDNNNNNNNDNNNNNNNNNNNNNNNNDN. Coiled-coil stretches lie at residues 1155 to 1225 and 1544 to 1610; these read DNII…KKIK and KLNN…KLIS. Residues 1554-1598 form a disordered region; it reads EKNKNANENSNEIETNKYNKKEELTNNRDGDGDDDDNIKNDKDEK. Residues 1567 to 1583 are compositionally biased toward basic and acidic residues; the sequence is ETNKYNKKEELTNNRDG. A Kelch 6 repeat occupies 1639-1685; sequence HIKYTLKYYITNLFRLKDLFNNEKEKWIDENYLAQVFILCNTIFFVN. The interval 1802-1825 is disordered; sequence HQEGKQEYNNKNNDNDNNNNNNNN. Over residues 1810 to 1825 the composition is skewed to low complexity; it reads NNKNNDNDNNNNNNNN. 1895 to 1902 lines the ATP pocket; that stretch reads GPAGTGKT. A coiled-coil region spans residues 2136–2188; the sequence is NDINENKKEKDNIEELKSDNVKEEKKTKKKHLEDNNNNKKKELFNLNNIEKEL. The segment at 2152-2171 is disordered; sequence KSDNVKEEKKTKKKHLEDNN. ATP is bound at residue 2224-2231; the sequence is GEAGCGKT. The stretch at 2447-2494 is one Kelch 7 repeat; it reads VIWCFGGFLGEKDNVNYKKSFDKYWKNTFKSIKVNRKISVFDFYVENN. ATP is bound by residues 2546–2553 and 2890–2897; these read GKTGVGKT and GIGGCGKT. 2 stretches are compositionally biased toward low complexity: residues 3138–3154 and 3652–3671; these read DNNN…DGNN and DQNF…NSTN. Disordered regions lie at residues 3138-3163, 3652-3686, 4042-4250, 4280-4299, 4773-4824, and 4910-4948; these read DNNN…EGND, DQNF…NHNN, EDND…EENV, NGKI…DFEN, MDFH…ENEE, and KIIK…HSGS. Over residues 4059–4086 the composition is skewed to acidic residues; it reads KMEDEEKMEEEKVDEEKMEEEKVDEEKM. The segment covering 4087–4247 has biased composition (basic and acidic residues); the sequence is EDEKVEEKME…EKGEEQKAEE (161 aa). Acidic residues-rich tracts occupy residues 4289–4299 and 4807–4823; these read DDLEEEEDFEN and DDDD…EENE. Basic and acidic residues predominate over residues 4912-4937; it reads IKKEKPGDNKDNKYTHDQKKETIHKE.

It belongs to the dynein heavy chain family. Consists of at least two heavy chains and a number of intermediate and light chains.

It is found in the cytoplasm. The protein localises to the cytoskeleton. In terms of biological role, acts as a motor for the intracellular retrograde motility of vesicles and organelles along microtubules. Dynein has ATPase activity; the force-producing power stroke is thought to occur on release of ADP. This chain is Dynein heavy chain-like protein 2, found in Plasmodium falciparum (isolate 3D7).